A 307-amino-acid polypeptide reads, in one-letter code: Voltage-dependent anion channel-forming protein sll1024 (307 aa).

4 consecutive transmembrane segments (helical) span residues 26-46, 54-74, 226-246, and 247-267; these read VIPAIASRVLVCMAFSLGVTL, FSIPIQESIVPSIVLGLLLVF, LIFLYCFITPFQIVNTLHWAT, and AFVVGIIAFTVFGIEEIGVEI.

It belongs to the anion channel-forming bestrophin (TC 1.A.46) family.

It is found in the cell membrane. The polypeptide is Voltage-dependent anion channel-forming protein sll1024 (Synechocystis sp. (strain ATCC 27184 / PCC 6803 / Kazusa)).